Consider the following 384-residue polypeptide: Mannitol-1-phosphate 5-dehydrogenase (384 aa).

An NAD(+)-binding site is contributed by 3–14 (ALHFGAGNIGRG).

It belongs to the mannitol dehydrogenase family.

The catalysed reaction is D-mannitol 1-phosphate + NAD(+) = beta-D-fructose 6-phosphate + NADH + H(+). This Clostridium acetobutylicum (strain ATCC 824 / DSM 792 / JCM 1419 / IAM 19013 / LMG 5710 / NBRC 13948 / NRRL B-527 / VKM B-1787 / 2291 / W) protein is Mannitol-1-phosphate 5-dehydrogenase (mtlD).